Reading from the N-terminus, the 513-residue chain is Probable vesicular acetylcholine transporter-A (513 aa).

At 1–39 the chain is on the cytoplasmic side; it reads MATEESGGLAQTAAVKLSEMGERTKQLGNAIQDPERQRR. A helical transmembrane segment spans residues 40–60; it reads IILVIVCVALLLDNMLYMVIV. Over 61–98 the chain is Lumenal, vesicle; it reads PIVPDYLAHLESESEQAHVKGNSSINITQNENFDLQIG. 2 N-linked (GlcNAc...) asparagine glycosylation sites follow: N82 and N86. A helical membrane pass occupies residues 99 to 119; it reads VLFASKAILQLLVNPLTGTFI. The Cytoplasmic segment spans residues 120–125; it reads DRVGYD. A helical membrane pass occupies residues 126–146; the sequence is IPLLIGLSIMFVSTCIFAFAE. Over 147–156 the chain is Lumenal, vesicle; the sequence is NYATLFMARS. Residues 157-174 traverse the membrane as a helical segment; it reads LQGLGSAFADTSGIAMIA. Topologically, residues 175-186 are cytoplasmic; the sequence is DKYAEESERSRA. The chain crosses the membrane as a helical span at residues 187 to 207; that stretch reads LGIALAFISFGSLAAPPFGGV. Over 208–215 the chain is Lumenal, vesicle; it reads LYEFAGKR. The chain crosses the membrane as a helical span at residues 216–236; the sequence is FPFIALACVCLADGILCLTVL. Topologically, residues 237 to 257 are cytoplasmic; that stretch reads KPFSSRTRENMPVGTPIYKLM. Residues 258-278 traverse the membrane as a helical segment; that stretch reads IDPYIAVVAGALTTCNIPLAF. The Lumenal, vesicle portion of the chain corresponds to 279-296; that stretch reads LEPTIANWMEETMNASQW. N292 is a glycosylation site (N-linked (GlcNAc...) asparagine). The chain crosses the membrane as a helical span at residues 297–317; it reads QIGITWLPAFFPHILGVYLTV. Residues 318-327 are Cytoplasmic-facing; the sequence is KLAAKYPHLQ. The chain crosses the membrane as a helical span at residues 328–348; it reads WFYGALGMVIIGASSCIVPAC. At 349–353 the chain is on the lumenal, vesicle side; it reads KNFEQ. A helical membrane pass occupies residues 354-374; that stretch reads LIIPLCGVCFGIALVDTALLP. Topologically, residues 375-390 are cytoplasmic; the sequence is TLAFLVDVRHVSVYGS. Residues 391–411 traverse the membrane as a helical segment; sequence VYAIADISYCVAYALGPIVAG. Residues 412–418 are Lumenal, vesicle-facing; sequence KIVHDLG. A helical membrane pass occupies residues 419–439; that stretch reads FVQLNLGMGLANVLYAPALLL. At 440–513 the chain is on the cytoplasmic side; it reads LRNVSLMKPS…EEETSEPEYI (74 aa). The tract at residues 475–513 is disordered; that stretch reads RKKHGYSSSGNCVPIDENGTFAGQSKSFSEEETSEPEYI. A compositionally biased stretch (acidic residues) spans 504-513; the sequence is EEETSEPEYI.

This sequence belongs to the major facilitator superfamily. Vesicular transporter family.

It localises to the membrane. In terms of biological role, involved in acetylcholine transport into synaptic vesicles. This chain is Probable vesicular acetylcholine transporter-A, found in Danio rerio (Zebrafish).